A 239-amino-acid polypeptide reads, in one-letter code: SkfA peptide export ATP-binding protein SkfE (239 aa).

Residues 4–232 (MQVQNLSKCY…AEWRKEVIRL (229 aa)) form the ABC transporter domain. 36-43 (GPNGAGKT) provides a ligand contact to ATP.

The protein belongs to the ABC transporter superfamily. SkfA peptide export (TC 3.A.1.128.1) family.

The protein resides in the cell membrane. It carries out the reaction sulfate(out) + ATP + H2O = sulfate(in) + ADP + phosphate + H(+). The catalysed reaction is thiosulfate(out) + ATP + H2O = thiosulfate(in) + ADP + phosphate + H(+). In terms of biological role, probably part of the ABC transporter SkfEF involved in the export of the bacteriocin SKF. Probably responsible for energy coupling to the transport system. This Bacillus subtilis (strain 168) protein is SkfA peptide export ATP-binding protein SkfE.